Reading from the N-terminus, the 332-residue chain is Glyceraldehyde-3-phosphate dehydrogenase (332 aa).

NAD(+)-binding positions include 12–13 (RI), aspartate 34, lysine 78, and threonine 120. D-glyceraldehyde 3-phosphate is bound by residues 149 to 151 (SCT), threonine 180, 209 to 210 (TG), and arginine 232. Cysteine 150 functions as the Nucleophile in the catalytic mechanism. NAD(+) is bound at residue asparagine 314.

The protein belongs to the glyceraldehyde-3-phosphate dehydrogenase family. Homotetramer.

It is found in the cytoplasm. It carries out the reaction D-glyceraldehyde 3-phosphate + phosphate + NAD(+) = (2R)-3-phospho-glyceroyl phosphate + NADH + H(+). Its pathway is carbohydrate degradation; glycolysis; pyruvate from D-glyceraldehyde 3-phosphate: step 1/5. Functionally, catalyzes the oxidative phosphorylation of glyceraldehyde 3-phosphate (G3P) to 1,3-bisphosphoglycerate (BPG) using the cofactor NAD. The first reaction step involves the formation of a hemiacetal intermediate between G3P and a cysteine residue, and this hemiacetal intermediate is then oxidized to a thioester, with concomitant reduction of NAD to NADH. The reduced NADH is then exchanged with the second NAD, and the thioester is attacked by a nucleophilic inorganic phosphate to produce BPG. The sequence is that of Glyceraldehyde-3-phosphate dehydrogenase (gapA) from Buchnera aphidicola subsp. Schizaphis graminum (strain Sg).